The sequence spans 556 residues: Glucose-6-phosphate isomerase (556 aa).

The active-site Proton donor is the Glu364. Residues His395 and Lys521 contribute to the active site.

It belongs to the GPI family.

The protein resides in the cytoplasm. The enzyme catalyses alpha-D-glucose 6-phosphate = beta-D-fructose 6-phosphate. It participates in carbohydrate biosynthesis; gluconeogenesis. The protein operates within carbohydrate degradation; glycolysis; D-glyceraldehyde 3-phosphate and glycerone phosphate from D-glucose: step 2/4. Catalyzes the reversible isomerization of glucose-6-phosphate to fructose-6-phosphate. This chain is Glucose-6-phosphate isomerase, found in Corynebacterium kroppenstedtii (strain DSM 44385 / JCM 11950 / CIP 105744 / CCUG 35717).